Here is a 453-residue protein sequence, read N- to C-terminus: Pup--protein ligase (453 aa).

E9 lines the Mg(2+) pocket. R53 lines the ATP pocket. Y55 provides a ligand contact to Mg(2+). The active-site Proton acceptor is D57. E63 is a binding site for Mg(2+). Residues T66 and W420 each contribute to the ATP site.

This sequence belongs to the Pup ligase/Pup deamidase family. Pup-conjugating enzyme subfamily.

The enzyme catalyses ATP + [prokaryotic ubiquitin-like protein]-L-glutamate + [protein]-L-lysine = ADP + phosphate + N(6)-([prokaryotic ubiquitin-like protein]-gamma-L-glutamyl)-[protein]-L-lysine.. It participates in protein degradation; proteasomal Pup-dependent pathway. It functions in the pathway protein modification; protein pupylation. Functionally, catalyzes the covalent attachment of the prokaryotic ubiquitin-like protein modifier Pup to the proteasomal substrate proteins, thereby targeting them for proteasomal degradation. This tagging system is termed pupylation. The ligation reaction involves the side-chain carboxylate of the C-terminal glutamate of Pup and the side-chain amino group of a substrate lysine. The chain is Pup--protein ligase from Kribbella flavida (strain DSM 17836 / JCM 10339 / NBRC 14399).